The following is a 268-amino-acid chain: Microtubule-associated protein RP/EB family member 1 (268 aa).

An N-acetylalanine modification is found at Ala2. Residues 14 to 116 (NLSRHDMLAW…FVQWFKKFFD (103 aa)) form the Calponin-homology (CH) domain. Residue Lys66 is modified to N6-crotonyllysine. Tyr124 carries the phosphotyrosine modification. The interaction with MTUS2/TIP150 stretch occupies residues 124–268 (YDPVAARQGQ…GGPQEEQEEY (145 aa)). Over residues 146–160 (LNKPKKPLSSSSAAP) the composition is skewed to low complexity. The disordered stretch occupies residues 146–191 (LNKPKKPLSSSSAAPQRPISTQRTAAAPKAGPGVVRKNPGVGNGDD). Phosphoserine occurs at positions 155 and 165. Residues 185 to 255 (GVGNGDDEAA…LYATDEGFVI (71 aa)) enclose the EB1 C-terminal domain. The interval 185 to 268 (GVGNGDDEAA…GGPQEEQEEY (84 aa)) is interaction with CDK5RAP2. The interval 206-211 (TVEDLE) is interaction with APC. Residues 208–268 (EDLEKERDFY…GGPQEEQEEY (61 aa)) are DCTN1-binding. Position 220 is an N6-acetyllysine (Lys220). The segment at 220–242 (KLRNIELICQENEGENDPVLQRI) is APC-binding. The tract at residues 232-255 (EGENDPVLQRIVDILYATDEGFVI) is interaction with SKA1.

The protein belongs to the MAPRE family. In terms of assembly, homodimer. Heterodimer with MAPRE3. Interacts with DCTN1, DCTN2, TERF1 and dynein intermediate chain. Interaction with DIAPH1 and DIAPH2. Interacts (via C-terminal residues 206-211) with APC (via C-terminal residues 2674-2845); the interaction inhibits association with and bundling of F-actin. Interacts with CLASP2, DST, KIF2C and STIM1; probably required for their targeting to the growing microtubule plus ends. Interacts with MTUS2; interaction is direct and probably targets MTUS2 to microtubules. Interacts (via C-terminus) with SKA1 (via SXIP motif); the interaction is direct and stabilizes the kinetochore-microtubule attachment of the SKA1 complex. Interacts with APC2. Interacts with CLASP1. Interacts with CDK5RAP2. Interacts with MACF1. Interacts with RABL2/RABL2A; binds preferentially to GTP-bound RABL2. Interacts with KCNAB2. Interacts (via C-terminus) with CLIP1. Interacts with SLAIN2 and SLAIN1. Interacts with KIF18B; this interaction is required for efficient accumulation of KIF18B at microtubule plus ends. Interacts with MISP. Interacts with KNSTRN. Interacts with NCKAP5L. Interacts with CAMSAP2. Interacts with PDE4DIP isoform 13/MMG8/SMYLE; this interaction is required for its recruitment to the Golgi apparatus. Forms a pericentrosomal complex with AKAP9, CDK5RAP2 and PDE4DIP isoform 13/MMG8/SMYLE; within this complex, MAPRE1 binding to CDK5RAP2 may be mediated by PDE4DIP. Interacts with AKNA. Interacts with GAS2L1, GAS2L2, and GAS2L3. Interacts with RARRES1 and AGBL2. In terms of processing, acetylation at Lys-220 by KAT2B/PCAF promotes dynamic kinetochore-microtubule interactions in early mitosis. Post-translationally, crotonylated by KAT5 during mitosis, promoting astral microtubule plasticity and dynamic connection between astral microtubules and the cortex during mitotic chromosome segregation, thereby ensuring accurate spindle positioning in mitosis. Decrotonylated by HDAC3.

The protein resides in the cytoplasm. Its subcellular location is the cytoskeleton. It is found in the microtubule organizing center. It localises to the centrosome. The protein localises to the golgi apparatus. The protein resides in the spindle. Its subcellular location is the spindle pole. Plus-end tracking protein (+TIP) that binds to the plus-end of microtubules and regulates the dynamics of the microtubule cytoskeleton. Recruits other +TIP proteins to microtubules by binding to a conserved Ser-X-Leu-Pro (SXLP) motif in their polypeptide chains. Promotes cytoplasmic microtubule nucleation and elongation. Involved in mitotic spindle positioning by stabilizing microtubules and promoting dynamic connection between astral microtubules and the cortex during mitotic chromosome segregation. Assists chromosome alignment in metaphase by recruiting the SKA complex to the spindle and stabilizing its interactions with microtubule bundles (K-fibers). Also acts as a regulator of minus-end microtubule organization: interacts with the complex formed by AKAP9 and PDE4DIP, leading to recruit CAMSAP2 to the Golgi apparatus, thereby tethering non-centrosomal minus-end microtubules to the Golgi, an important step for polarized cell movement. Promotes elongation of CAMSAP2-decorated microtubule stretches on the minus-end of microtubules. Acts as a regulator of autophagosome transport via interaction with CAMSAP2. Functions downstream of Rho GTPases and DIAPH1 in stable microtubule formation. May play a role in cell migration. The chain is Microtubule-associated protein RP/EB family member 1 (MAPRE1) from Pongo abelii (Sumatran orangutan).